A 144-amino-acid chain; its full sequence is MLMPKRVKFRREHRGKMRGRAKGGTEVHFGEYGLQALEASWITNRQIEAARIAMTRYMKRGGKVWIKIFPSKPYTAKPLEVRMGSGKGAPEGWVAVVKPGKVMFEISGVSEEVAREALRLASHKLPVKCKFVKREEVGGDANEN.

The protein belongs to the universal ribosomal protein uL16 family. In terms of assembly, part of the 50S ribosomal subunit.

Functionally, binds 23S rRNA and is also seen to make contacts with the A and possibly P site tRNAs. The sequence is that of Large ribosomal subunit protein uL16 from Halalkalibacterium halodurans (strain ATCC BAA-125 / DSM 18197 / FERM 7344 / JCM 9153 / C-125) (Bacillus halodurans).